The chain runs to 872 residues: Alanine--tRNA ligase (872 aa).

H567, H571, C669, and H673 together coordinate Zn(2+).

This sequence belongs to the class-II aminoacyl-tRNA synthetase family. The cofactor is Zn(2+).

The protein resides in the cytoplasm. The catalysed reaction is tRNA(Ala) + L-alanine + ATP = L-alanyl-tRNA(Ala) + AMP + diphosphate. Catalyzes the attachment of alanine to tRNA(Ala) in a two-step reaction: alanine is first activated by ATP to form Ala-AMP and then transferred to the acceptor end of tRNA(Ala). Also edits incorrectly charged Ser-tRNA(Ala) and Gly-tRNA(Ala) via its editing domain. The sequence is that of Alanine--tRNA ligase from Streptococcus gordonii (strain Challis / ATCC 35105 / BCRC 15272 / CH1 / DL1 / V288).